The primary structure comprises 432 residues: Pachytene checkpoint protein 2 homolog (432 aa).

Met-1 is modified (N-acetylmethionine). ATP is bound at residue 179–186 (GPPGTGKT).

This sequence belongs to the AAA ATPase family. PCH2 subfamily. Specifically interacts with the ligand binding domain of the thyroid receptor (TR). This interaction does not require the presence of thyroid hormone for its interaction. Interacts with HPV16 E1. Interacts with proteasome subunit PSMA8; to participate in meiosis progression during spermatogenesis.

Its function is as follows. Plays a key role in chromosome recombination and chromosome structure development during meiosis. Required at early steps in meiotic recombination that leads to non-crossovers pathways. Also needed for efficient completion of homologous synapsis by influencing crossover distribution along the chromosomes affecting both crossovers and non-crossovers pathways. Also required for development of higher-order chromosome structures and is needed for synaptonemal-complex formation. In males, required for efficient synapsis of the sex chromosomes and for sex body formation. Promotes early steps of the DNA double-strand breaks (DSBs) repair process upstream of the assembly of RAD51 complexes. Required for depletion of HORMAD1 and HORMAD2 from synapsed chromosomes. Plays a role in mitotic spindle assembly checkpoint (SAC) activation. In Homo sapiens (Human), this protein is Pachytene checkpoint protein 2 homolog (TRIP13).